Consider the following 92-residue polypeptide: C-C motif chemokine 5 (92 aa).

An N-terminal signal peptide occupies residues 1–23; that stretch reads MKVSTAAFAVLLTAAAFCTPASA. Cystine bridges form between Cys33–Cys57 and Cys34–Cys73.

This sequence belongs to the intercrine beta (chemokine CC) family.

The protein resides in the secreted. Its function is as follows. Chemoattractant for blood monocytes, memory T-helper cells and eosinophils. Causes the release of histamine from basophils and activates eosinophils. May activate several chemokine receptors including CCR1, CCR3, CCR4 and CCR5. May also be an agonist of the G protein-coupled receptor GPR75. Together with GPR75, may play a role in neuron survival through activation of a downstream signaling pathway involving the PI3, Akt and MAP kinases. By activating GPR75 may also play a role in insulin secretion by islet cells. The polypeptide is C-C motif chemokine 5 (CCL5) (Felis catus (Cat)).